Here is a 35-residue protein sequence, read N- to C-terminus: Photosystem II reaction center protein T (35 aa).

Residues 3–23 (ALVYTFLLVGTLGIIFFAIFF) traverse the membrane as a helical segment.

This sequence belongs to the PsbT family. In terms of assembly, PSII is composed of 1 copy each of membrane proteins PsbA, PsbB, PsbC, PsbD, PsbE, PsbF, PsbH, PsbI, PsbJ, PsbK, PsbL, PsbM, PsbT, PsbY, PsbZ, Psb30/Ycf12, at least 3 peripheral proteins of the oxygen-evolving complex and a large number of cofactors. It forms dimeric complexes.

Its subcellular location is the plastid. The protein resides in the chloroplast thylakoid membrane. Functionally, found at the monomer-monomer interface of the photosystem II (PS II) dimer, plays a role in assembly and dimerization of PSII. PSII is a light-driven water plastoquinone oxidoreductase, using light energy to abstract electrons from H(2)O, generating a proton gradient subsequently used for ATP formation. This is Photosystem II reaction center protein T from Chaetosphaeridium globosum (Charophycean green alga).